Here is a 439-residue protein sequence, read N- to C-terminus: Packaging protein 1 (439 aa).

Positions M1–P23 are enriched in polar residues. The tract at residues M1–K42 is disordered. G151–S158 is an ATP binding site. Residues E419 to T439 are DNA-binding.

Belongs to the adenoviridae packaging protein 1 family. In terms of assembly, homodimer. Part of a genome packaging complex composed of packaging proteins 1, 2 and 3; this complex specifically binds to the packaging sequence on the left end of viral genomic DNA and performs packaging of the viral genome. Interacts with protein 33K.

Its subcellular location is the virion. The protein resides in the host nucleus. It localises to the host nucleoplasm. It is found in the host nucleolus. Its function is as follows. Component of the packaging machinery which encapsidates the viral DNA into preformed capsids and transcriptional activator of the viral major late promoter (MLP). Binds, along with packaging proteins 2 and 3, to the specific packaging sequence on the left end of viral genomic DNA and displays ATPase activity thereby providing the power stroke of the packaging machinery. The activity of packaging protein IVa2 is stimulated by protein 33K which acts as a terminase. May be the protein that pumps DNA into the capsid powered by ATP hydrolysis. Specifically binds to the 5'-CG-3' nucleotides of the repeats making up the packaging sequence. Component of the DEF-A and DEF-B transcription factors that bind downstream elements of the major late promoter (MLP), and stimulate transcription from the MLP after initiation of viral DNA replication. DEF-A is a heterodimer packaging proteins 1 and 2 and DEF-B is a homodimer of packaging protein 1. The sequence is that of Packaging protein 1 from Fowl adenovirus A serotype 1 (strain CELO / Phelps) (FAdV-1).